A 250-amino-acid chain; its full sequence is Uridylate kinase (250 aa).

17 to 20 (KLSG) provides a ligand contact to ATP. Position 59 (G59) interacts with UMP. Residues G60 and R64 each coordinate ATP. Residues D79 and 140 to 147 (TGNPYFTT) each bind UMP. 3 residues coordinate ATP: T167, Y173, and D176.

Belongs to the UMP kinase family. Homohexamer.

The protein resides in the cytoplasm. The enzyme catalyses UMP + ATP = UDP + ADP. It functions in the pathway pyrimidine metabolism; CTP biosynthesis via de novo pathway; UDP from UMP (UMPK route): step 1/1. With respect to regulation, inhibited by UTP. Functionally, catalyzes the reversible phosphorylation of UMP to UDP. This chain is Uridylate kinase, found in Myxococcus xanthus (strain DK1622).